Reading from the N-terminus, the 405-residue chain is uncharacterized protein (405 aa).

12 helical membrane passes run 19 to 39 (ILSIVMFNFASYLTIGLPLAV), 47 to 67 (VMGFSAFWAGLVISLQYFATL), 85 to 105 (IVVFGLCGCFLSGLGYLTAGL), 129 to 149 (SFAGTGSTLWGVGVVGSLHIG), 157 to 177 (IVTYGAMAMGAPLGVVFYHWG), 178 to 198 (GLQALALIIMGVALVAILLAI), 224 to 244 (GMALALASAGFGVIATFITLF), 252 to 272 (GAAFALTLFSCAFVGTRLLFP), 283 to 303 (VAMICFSVEIIGLLLVGVATM), 309 to 329 (IGVLLAGAGFSLVFPALGVVA), 344 to 364 (TYTVFMDLSLGVTGPLAGLVM), and 366 to 386 (WAGVPVIYLAAAGLVAIALLL).

It belongs to the major facilitator superfamily. YhhS family.

Its subcellular location is the cell inner membrane. This is an uncharacterized protein from Escherichia coli O157:H7.